The chain runs to 401 residues: MDSSADPRNASNCTDPFSPSSMCSPVPSPSSWVNFSHLEGNLSDPCIRNRTELGGSDSLCPPTGSPSMVTAITIMALYSIVCVVGLFGNFLVMYVIVRYTKMKTATNIYIFNLALADALATSTLPFQSVNYLMGTWPFGTILCKIVISIDYYNMFTSIFTLCTMSVDRYIAVCHPVKALDFRTPRNAKIINVCNWILSSAIGLPVMFMATTKYRNGSIDCALTFSHPTWYWENLLKICVFIFAFIMPVLIITVCYGLMILRLKSVRMLSGSKEKDRNLRRITRMVLVVVAVFIVCWTPIHIYVIIKALITIPETTFQTVSWHFCIALGYTNSCLNPVLYAFLDENFKRCFREFCIPTSSTIEQQNSARIRQNTRDHPSTANTVDRTNHQLENLEAETAPLP.

Topologically, residues 1–69 (MDSSADPRNA…CPPTGSPSMV (69 aa)) are extracellular. N-linked (GlcNAc...) asparagine glycans are attached at residues Asn-9, Asn-12, Asn-34, Asn-41, and Asn-49. A helical membrane pass occupies residues 70 to 94 (TAITIMALYSIVCVVGLFGNFLVMY). Topologically, residues 95–107 (VIVRYTKMKTATN) are cytoplasmic. Residues 108 to 132 (IYIFNLALADALATSTLPFQSVNYL) traverse the membrane as a helical segment. The Extracellular segment spans residues 133–143 (MGTWPFGTILC). Cys-143 and Cys-220 are joined by a disulfide. The helical transmembrane segment at 144 to 166 (KIVISIDYYNMFTSIFTLCTMSV) threads the bilayer. Residues 167-186 (DRYIAVCHPVKALDFRTPRN) lie on the Cytoplasmic side of the membrane. Tyr-169 carries the phosphotyrosine modification. Residues 187-208 (AKIINVCNWILSSAIGLPVMFM) traverse the membrane as a helical segment. Residues 209–231 (ATTKYRNGSIDCALTFSHPTWYW) lie on the Extracellular side of the membrane. The chain crosses the membrane as a helical span at residues 232 to 256 (ENLLKICVFIFAFIMPVLIITVCYG). The Cytoplasmic segment spans residues 257 to 280 (LMILRLKSVRMLSGSKEKDRNLRR). Residues 281–307 (ITRMVLVVVAVFIVCWTPIHIYVIIKA) traverse the membrane as a helical segment. Over 308–315 (LITIPETT) the chain is Extracellular. The chain crosses the membrane as a helical span at residues 316–339 (FQTVSWHFCIALGYTNSCLNPVLY). Positions 335-339 (NPVLY) match the NPxxY; plays a role in stabilizing the activated conformation of the receptor motif. Topologically, residues 340–401 (AFLDENFKRC…NLEAETAPLP (62 aa)) are cytoplasmic. Residue Cys-354 is the site of S-palmitoyl cysteine attachment. Residues 365–385 (NSARIRQNTRDHPSTANTVDR) form a disordered region. Ser-366 bears the Phosphoserine mark. Thr-373 bears the Phosphothreonine mark. Residue Ser-378 is modified to Phosphoserine. At Thr-397 the chain carries Phosphothreonine.

This sequence belongs to the G-protein coupled receptor 1 family. As to quaternary structure, forms homooligomers and heterooligomers with other GPCRs, such as OPRD1, OPRK1, OPRL1, NPFFR2, ADRA2A, SSTR2, CNR1 and CCR5 (probably in dimeric forms). Interacts with heterotrimeric G proteins; interaction with a heterotrimeric complex containing GNAI1, GNB1 and GNG2 stabilizes the active conformation of the receptor and increases its affinity for endomorphin-2, the synthetic opioid peptide DAMGO and for morphinan agonists. Interacts with PPL; the interaction disrupts agonist-mediated G-protein activation. Interacts (via C-terminus) with DNAJB4 (via C-terminus). Interacts with calmodulin; the interaction inhibits the constitutive activity of OPRM1; it abolishes basal and attenuates agonist-stimulated G-protein coupling. Interacts with FLNA, PLD2, RANBP9 and WLS and GPM6A. Interacts with RTP4. Interacts with SYP and GNAS. Interacts with RGS9, RGS17, RGS20, RGS4, PPP1R9B and HINT1. Post-translationally, phosphorylated. Differentially phosphorylated in basal and agonist-induced conditions. Agonist-mediated phosphorylation modulates receptor internalization. Phosphorylated by GRK2 in a agonist-dependent manner. Phosphorylation at Tyr-169 requires receptor activation, is dependent on non-receptor protein tyrosine kinase Src and results in a decrease in agonist efficacy by reducing G-protein coupling efficiency. Phosphorylated on tyrosine residues; the phosphorylation is involved in agonist-induced G-protein-independent receptor down-regulation. Phosphorylation at Ser-378 is involved in G-protein-dependent but not beta-arrestin-dependent activation of the ERK pathway. In terms of processing, ubiquitinated. A basal ubiquitination seems not to be related to degradation. Ubiquitination is increased upon formation of OPRM1:OPRD1 oligomers leading to proteasomal degradation; the ubiquitination is diminished by RTP4.

The protein localises to the cell membrane. Its subcellular location is the cell projection. It localises to the axon. It is found in the perikaryon. The protein resides in the dendrite. The protein localises to the endosome. In terms of biological role, receptor for endogenous opioids such as beta-endorphin and endomorphin. Receptor for natural and synthetic opioids including morphine, heroin, DAMGO, fentanyl, etorphine, buprenorphin and methadone. Also activated by enkephalin peptides, such as Met-enkephalin or Met-enkephalin-Arg-Phe, with higher affinity for Met-enkephalin-Arg-Phe. Agonist binding to the receptor induces coupling to an inactive GDP-bound heterotrimeric G-protein complex and subsequent exchange of GDP for GTP in the G-protein alpha subunit leading to dissociation of the G-protein complex with the free GTP-bound G-protein alpha and the G-protein beta-gamma dimer activating downstream cellular effectors. The agonist- and cell type-specific activity is predominantly coupled to pertussis toxin-sensitive G(i) and G(o) G alpha proteins, GNAI1, GNAI2, GNAI3 and GNAO1, and to a lesser extent to pertussis toxin-insensitive G alpha proteins GNAZ and GNA15. They mediate an array of downstream cellular responses, including inhibition of adenylate cyclase activity and both N-type and L-type calcium channels, activation of inward rectifying potassium channels, mitogen-activated protein kinase (MAPK), phospholipase C (PLC), phosphoinositide/protein kinase (PKC), phosphoinositide 3-kinase (PI3K) and regulation of NF-kappa-B. Also couples to adenylate cyclase stimulatory G alpha proteins. The selective temporal coupling to G-proteins and subsequent signaling can be regulated by RGSZ proteins, such as RGS9, RGS17 and RGS4. Phosphorylation by members of the GPRK subfamily of Ser/Thr protein kinases and association with beta-arrestins is involved in short-term receptor desensitization. Beta-arrestins associate with the GPRK-phosphorylated receptor and uncouple it from the G-protein thus terminating signal transduction. The phosphorylated receptor is internalized through endocytosis via clathrin-coated pits which involves beta-arrestins. The activation of the ERK pathway occurs either in a G-protein-dependent or a beta-arrestin-dependent manner and is regulated by agonist-specific receptor phosphorylation. Acts as a class A G-protein coupled receptor (GPCR) which dissociates from beta-arrestin at or near the plasma membrane and undergoes rapid recycling. Receptor down-regulation pathways are varying with the agonist and occur dependent or independent of G-protein coupling. Endogenous ligands induce rapid desensitization, endocytosis and recycling. Heterooligomerization with other GPCRs can modulate agonist binding, signaling and trafficking properties. Involved in neurogenesis. The protein is Mu-type opioid receptor (OPRM1) of Sus scrofa (Pig).